We begin with the raw amino-acid sequence, 720 residues long: Polyribonucleotide nucleotidyltransferase (720 aa).

Mg(2+) contacts are provided by Asp487 and Asp493. Residues 554–613 (PRIETFKIPTDKIREVIGTGGKVIREIVEKTGAKINIEDDGTVKVASNDGEAMKAAIKWI) form the KH domain. The S1 motif domain maps to 623–691 (GQIYEGTVVK…DRGKTRLSMK (69 aa)). Positions 691 to 720 (KAVDQQTGEDLEAAGHKAEKADAPREAAGE) are disordered. Over residues 703 to 720 (AAGHKAEKADAPREAAGE) the composition is skewed to basic and acidic residues.

This sequence belongs to the polyribonucleotide nucleotidyltransferase family. Mg(2+) serves as cofactor.

It localises to the cytoplasm. The catalysed reaction is RNA(n+1) + phosphate = RNA(n) + a ribonucleoside 5'-diphosphate. Involved in mRNA degradation. Catalyzes the phosphorolysis of single-stranded polyribonucleotides processively in the 3'- to 5'-direction. This is Polyribonucleotide nucleotidyltransferase from Nitrobacter hamburgensis (strain DSM 10229 / NCIMB 13809 / X14).